Consider the following 452-residue polypeptide: Tol-Pal system protein TolB (452 aa).

Residues 1-31 form the signal peptide; it reads MCGVRRGMGVLLLFCAVALCAMPFVVRSVWG.

This sequence belongs to the TolB family. The Tol-Pal system is composed of five core proteins: the inner membrane proteins TolA, TolQ and TolR, the periplasmic protein TolB and the outer membrane protein Pal. They form a network linking the inner and outer membranes and the peptidoglycan layer.

It is found in the periplasm. In terms of biological role, part of the Tol-Pal system, which plays a role in outer membrane invagination during cell division and is important for maintaining outer membrane integrity. The chain is Tol-Pal system protein TolB from Syntrophus aciditrophicus (strain SB).